Here is a 191-residue protein sequence, read N- to C-terminus: Ribonuclease M5 1 (191 aa).

The 84-residue stretch at K10–P93 folds into the Toprim domain. E16, D62, and D64 together coordinate Mg(2+).

Belongs to the ribonuclease M5 family. The cofactor is Mg(2+).

The protein localises to the cytoplasm. The enzyme catalyses Endonucleolytic cleavage of RNA, removing 21 and 42 nucleotides, respectively, from the 5'- and 3'-termini of a 5S-rRNA precursor.. In terms of biological role, required for correct processing of both the 5' and 3' ends of 5S rRNA precursor. Cleaves both sides of a double-stranded region yielding mature 5S rRNA in one step. The chain is Ribonuclease M5 1 from Ligilactobacillus salivarius (strain CECT 5713) (Lactobacillus salivarius).